A 480-amino-acid polypeptide reads, in one-letter code: Sestrin-2 (480 aa).

At M1 the chain carries N-acetylmethionine. Residues 20–45 are disordered; sequence PGGVGDSGPGEEQRESRARRGPRGPS. Positions 66 to 239 are N-terminal domain; mediates the alkylhydroperoxide reductase activity; the sequence is GLEALMSSGR…APTPPSEQSS (174 aa). The Cysteine sulfenic acid (-SOH) intermediate role is filled by C125. K175 participates in a covalent cross-link: Glycyl lysine isopeptide (Lys-Gly) (interchain with G-Cter in ubiquitin). The segment at 222 to 252 is disordered; that stretch reads ADGSPAPQAPTPPSEQSSPPSRDPLNNSGGF. At S249 the chain carries Phosphoserine. The interval 308–480 is C-terminal domain; mediates TORC1 regulation; the sequence is PHPDMLCFVE…ALRAITRYMT (173 aa). L-leucine is bound by residues 374-377, T386, and E451; that span reads TYNT.

It belongs to the sestrin family. As to quaternary structure, interacts with the GATOR2 complex which is composed of MIOS, SEC13, SEH1L, WDR24 and WDR59; the interaction is negatively regulated by leucine. Conveys leucine availability via direct interaction with SEH1L and WDR24 components of the GATOR2 complex. Interacts with RRAGA, RRAGB, RRAGC and RRAGD; may function as a guanine nucleotide dissociation inhibitor for RRAGs and regulate them. May interact with the TORC2 complex. Interacts with KEAP1, RBX1, SQSTM and ULK1; to regulate the degradation of KEAP1. May also associate with the complex composed of TSC1, TSC2 and the AMP-responsive protein kinase/AMPK to regulate TORC1 signaling. May interact with PRDX1. Post-translationally, phosphorylated by ULK1 at multiple sites. In terms of processing, ubiquitinated at Lys-175 by RNF167 via 'Lys-63'-linked polyubiquitination in response to leucine deprivation: ubiquitination promotes SESN2-interaction with the GATOR2 complex, leading to inhibit the TORC1 signaling pathway. Deubiquitinated at Lys-175 by STAMBPL1, promoting the TORC1 signaling pathway. Ubiquitinated by RNF186; ubiquitination mediates proteasomal degradation.

It is found in the cytoplasm. It carries out the reaction a hydroperoxide + L-cysteinyl-[protein] = S-hydroxy-L-cysteinyl-[protein] + an alcohol. Its function is as follows. Functions as an intracellular leucine sensor that negatively regulates the mTORC1 signaling pathway through the GATOR complex. In absence of leucine, binds the GATOR subcomplex GATOR2 and prevents mTORC1 signaling. Binding of leucine to SESN2 disrupts its interaction with GATOR2 thereby activating the TORC1 signaling pathway. This stress-inducible metabolic regulator also plays a role in protection against oxidative and genotoxic stresses. May negatively regulate protein translation in response to endoplasmic reticulum stress, via mTORC1. May positively regulate the transcription by NFE2L2 of genes involved in the response to oxidative stress by facilitating the SQSTM1-mediated autophagic degradation of KEAP1. May also mediate TP53 inhibition of TORC1 signaling upon genotoxic stress. Moreover, may prevent the accumulation of reactive oxygen species (ROS) through the alkylhydroperoxide reductase activity born by the N-terminal domain of the protein. Was originally reported to contribute to oxidative stress resistance by reducing PRDX1. However, this could not be confirmed. This chain is Sestrin-2, found in Pongo abelii (Sumatran orangutan).